The primary structure comprises 540 residues: Ribonuclease Y (540 aa).

A helical membrane pass occupies residues threonine 4–tyrosine 24. A KH domain is found at threonine 230–leucine 293. The HD domain maps to valine 356–alanine 449.

The protein belongs to the RNase Y family.

The protein resides in the cell membrane. Endoribonuclease that initiates mRNA decay. The chain is Ribonuclease Y from Lactobacillus johnsonii (strain CNCM I-12250 / La1 / NCC 533).